We begin with the raw amino-acid sequence, 741 residues long: NAD(P)H-quinone oxidoreductase subunit 5, chloroplastic (741 aa).

The next 16 helical transmembrane spans lie at Trp-9 to Phe-29, Trp-40 to Ile-60, Ile-89 to Ile-109, Phe-125 to Ile-145, Val-147 to Thr-167, Gly-185 to Phe-205, Val-221 to Ser-241, Thr-258 to Ala-278, Leu-280 to Ile-300, Leu-327 to Ile-347, Ala-354 to Ser-374, Thr-396 to Ser-416, Leu-425 to Tyr-445, Ile-547 to Pro-567, Phe-602 to Cys-622, and Ile-720 to Tyr-740.

Belongs to the complex I subunit 5 family. As to quaternary structure, NDH is composed of at least 16 different subunits, 5 of which are encoded in the nucleus.

It is found in the plastid. The protein resides in the chloroplast thylakoid membrane. The enzyme catalyses a plastoquinone + NADH + (n+1) H(+)(in) = a plastoquinol + NAD(+) + n H(+)(out). The catalysed reaction is a plastoquinone + NADPH + (n+1) H(+)(in) = a plastoquinol + NADP(+) + n H(+)(out). Functionally, NDH shuttles electrons from NAD(P)H:plastoquinone, via FMN and iron-sulfur (Fe-S) centers, to quinones in the photosynthetic chain and possibly in a chloroplast respiratory chain. The immediate electron acceptor for the enzyme in this species is believed to be plastoquinone. Couples the redox reaction to proton translocation, and thus conserves the redox energy in a proton gradient. This Arabis hirsuta (Hairy rock-cress) protein is NAD(P)H-quinone oxidoreductase subunit 5, chloroplastic (ndhF).